Reading from the N-terminus, the 684-residue chain is Homoaconitase, mitochondrial (684 aa).

The [4Fe-4S] cluster site is built by Cys-337, Cys-397, and Cys-400.

It belongs to the aconitase/IPM isomerase family. The cofactor is [4Fe-4S] cluster.

Its subcellular location is the mitochondrion. It catalyses the reaction (2R,3S)-homoisocitrate = cis-homoaconitate + H2O. It participates in amino-acid biosynthesis; L-lysine biosynthesis via AAA pathway; L-alpha-aminoadipate from 2-oxoglutarate: step 3/5. Its function is as follows. Catalyzes the reversible hydration of cis-homoaconitate to (2R,3S)-homoisocitrate, a step in the alpha-aminoadipate pathway for lysine biosynthesis. The protein is Homoaconitase, mitochondrial (LYS4) of Candida albicans (strain SC5314 / ATCC MYA-2876) (Yeast).